A 344-amino-acid polypeptide reads, in one-letter code: Cell cycle control protein 50C (344 aa).

Topologically, residues 1–34 (MEETPQHCLSRLPDNSALKQQELPAHRLYFTARR) are cytoplasmic. The chain crosses the membrane as a helical span at residues 35 to 55 (VLFVFFTTGIFCLCMGIILIL). Over 56 to 306 (SARSTQEIEI…STLTWCGGNS (251 aa)) the chain is Extracellular. N-linked (GlcNAc...) asparagine glycosylation is found at N66 and N261. Residues 307 to 327 (LFLGLAYTVTGAITWLASFTM) form a helical membrane-spanning segment. The Cytoplasmic segment spans residues 328–344 (MAIHITLKNKQMSFFHQ).

The protein belongs to the CDC50/LEM3 family. As to expression, specifically expressed in testis.

It is found in the membrane. The protein is Cell cycle control protein 50C (TMEM30C) of Macaca fascicularis (Crab-eating macaque).